A 200-amino-acid chain; its full sequence is Recombination protein RecR (200 aa).

The segment at C57–C72 adopts a C4-type zinc-finger fold. The Toprim domain occupies G81–P176.

It belongs to the RecR family.

May play a role in DNA repair. It seems to be involved in an RecBC-independent recombinational process of DNA repair. It may act with RecF and RecO. The polypeptide is Recombination protein RecR (Actinobacillus succinogenes (strain ATCC 55618 / DSM 22257 / CCUG 43843 / 130Z)).